Consider the following 516-residue polypeptide: Glucose-6-phosphate 1-dehydrogenase 5, cytoplasmic (516 aa).

Residues 38–45, Arg73, Tyr156, and Lys183 contribute to the NADP(+) site; that span reads GASGDLAK. D-glucose 6-phosphate is bound by residues Lys183, 213–217, Glu251, and Asp270; that span reads HYLGK. His275 functions as the Proton acceptor in the catalytic mechanism. Lys358 is a binding site for NADP(+). Residues Lys361 and Lys366 each coordinate D-glucose 6-phosphate. NADP(+) is bound by residues Lys367, Arg371, and Arg395. Gln397 lines the D-glucose 6-phosphate pocket. Residues 403–405, 423–425, Arg489, and Trp511 each bind NADP(+); these read YMK and DLS.

It belongs to the glucose-6-phosphate dehydrogenase family. As to quaternary structure, forms homodimer. As to expression, expressed in leaves and stems.

The protein localises to the cytoplasm. It is found in the cytosol. It catalyses the reaction D-glucose 6-phosphate + NADP(+) = 6-phospho-D-glucono-1,5-lactone + NADPH + H(+). The protein operates within carbohydrate degradation; pentose phosphate pathway; D-ribulose 5-phosphate from D-glucose 6-phosphate (oxidative stage): step 1/3. With respect to regulation, regulated by metabolites. Functionally, catalyzes the rate-limiting step of the oxidative pentose-phosphate pathway, which represents a route for the dissimilation of carbohydrates besides glycolysis. The main function of this enzyme is to provide reducing power (NADPH) and pentose phosphates for fatty acid and nucleic acid synthesis which are involved in membrane synthesis and cell division. This Arabidopsis thaliana (Mouse-ear cress) protein is Glucose-6-phosphate 1-dehydrogenase 5, cytoplasmic.